The primary structure comprises 172 residues: 2S seed storage-like protein (172 aa).

Residues 1 to 35 (MGVFSPSTTRLTLKWFSLSVALFLLFHWGIPSVDG) form the signal peptide. A disordered region spans residues 108–172 (FMDSDSQEDA…RYSMTGSSFK (65 aa)). The segment covering 151 to 160 (EPPRRCDIQR) has biased composition (basic and acidic residues).

This sequence belongs to the 2S seed storage albumins family.

This Picea glauca (White spruce) protein is 2S seed storage-like protein.